Reading from the N-terminus, the 212-residue chain is Uridine kinase (212 aa).

Position 13–20 (13–20 (GASASGKS)) interacts with ATP.

Belongs to the uridine kinase family.

It localises to the cytoplasm. It catalyses the reaction uridine + ATP = UMP + ADP + H(+). It carries out the reaction cytidine + ATP = CMP + ADP + H(+). The protein operates within pyrimidine metabolism; CTP biosynthesis via salvage pathway; CTP from cytidine: step 1/3. It participates in pyrimidine metabolism; UMP biosynthesis via salvage pathway; UMP from uridine: step 1/1. This Shewanella halifaxensis (strain HAW-EB4) protein is Uridine kinase.